The following is a 344-amino-acid chain: tRNA N6-adenosine threonylcarbamoyltransferase (344 aa).

Fe cation-binding residues include His-113 and His-117. Residues 135–139 (LVSGG), Asp-169, Gly-182, Asp-186, and Asn-278 each bind substrate. Asp-306 is a binding site for Fe cation.

This sequence belongs to the KAE1 / TsaD family. It depends on Fe(2+) as a cofactor.

It is found in the cytoplasm. The enzyme catalyses L-threonylcarbamoyladenylate + adenosine(37) in tRNA = N(6)-L-threonylcarbamoyladenosine(37) in tRNA + AMP + H(+). Required for the formation of a threonylcarbamoyl group on adenosine at position 37 (t(6)A37) in tRNAs that read codons beginning with adenine. Is involved in the transfer of the threonylcarbamoyl moiety of threonylcarbamoyl-AMP (TC-AMP) to the N6 group of A37, together with TsaE and TsaB. TsaD likely plays a direct catalytic role in this reaction. The sequence is that of tRNA N6-adenosine threonylcarbamoyltransferase from Corynebacterium efficiens (strain DSM 44549 / YS-314 / AJ 12310 / JCM 11189 / NBRC 100395).